The following is a 338-amino-acid chain: Glycerol-3-phosphate dehydrogenase [NAD(P)+] (338 aa).

NADPH-binding residues include S14, F15, R35, and K109. The sn-glycerol 3-phosphate site is built by K109 and G137. A141 is a binding site for NADPH. K192, D247, S257, R258, and N259 together coordinate sn-glycerol 3-phosphate. The active-site Proton acceptor is K192. NADPH is bound at residue R258. The NADPH site is built by L282 and E284.

Belongs to the NAD-dependent glycerol-3-phosphate dehydrogenase family.

Its subcellular location is the cytoplasm. The enzyme catalyses sn-glycerol 3-phosphate + NAD(+) = dihydroxyacetone phosphate + NADH + H(+). It carries out the reaction sn-glycerol 3-phosphate + NADP(+) = dihydroxyacetone phosphate + NADPH + H(+). The protein operates within membrane lipid metabolism; glycerophospholipid metabolism. Functionally, catalyzes the reduction of the glycolytic intermediate dihydroxyacetone phosphate (DHAP) to sn-glycerol 3-phosphate (G3P), the key precursor for phospholipid synthesis. This chain is Glycerol-3-phosphate dehydrogenase [NAD(P)+], found in Rickettsia rickettsii (strain Iowa).